Here is a 1233-residue protein sequence, read N- to C-terminus: Mitogen-activated protein kinase kinase kinase kinase 4 (1233 aa).

Position 2 is an N-acetylalanine (Ala-2). Position 5 is a phosphoserine (Ser-5). The region spanning 25–289 (FELVEVVGNG…EQLLKHPFIR (265 aa)) is the Protein kinase domain. ATP is bound by residues 31–39 (VGNGTYGQV) and Lys-53. Asp-152 serves as the catalytic Proton acceptor. 3 disordered regions span residues 305–348 (IDRT…VPGE), 401–463 (QKEQ…VERE), and 489–805 (QAML…ETES). Positions 316–337 (DETEYEYSGSEEEEEEVPEQEG) are enriched in acidic residues. Residues Ser-323 and Ser-325 each carry the phosphoserine modification. Over residues 521-537 (PEPKPHYDPADRAREVQ) the composition is skewed to basic and acidic residues. Ser-543 carries the post-translational modification Phosphoserine. Over residues 544-559 (LKNNVSPVSRSHSFSD) the composition is skewed to polar residues. Phosphoserine is present on residues Ser-619, Ser-621, Ser-629, and Ser-646. The span at 654-663 (LLWERVEKLV) shows a compositional bias: basic and acidic residues. A compositionally biased stretch (low complexity) spans 666–692 (PGSGSSSGSSNSGSQPGSHPGSQSGSG). Phosphoserine occurs at positions 691, 703, and 706. 2 stretches are compositionally biased toward basic and acidic residues: residues 713–726 (SAAK…EVFR) and 741–756 (KELR…HKVT). A compositionally biased stretch (acidic residues) spans 766 to 781 (GTTDEEEEDVEQEGAD). The span at 783-803 (STSGPEDTRAASSPNLSNGET) shows a compositional bias: polar residues. Ser-785, Ser-794, Ser-795, Ser-799, and Ser-817 each carry phosphoserine. Phosphothreonine is present on Thr-822. Phosphoserine is present on residues Ser-846, Ser-849, Ser-894, and Ser-907. A mediates interaction with RAP2A region spans residues 852 to 1206 (PFIDPRLLQI…LKFLCGRNDK (355 aa)). The CNH domain occupies 920 to 1207 (NSEILCAALW…KFLCGRNDKV (288 aa)).

Belongs to the protein kinase superfamily. STE Ser/Thr protein kinase family. STE20 subfamily. Interacts with the SH3 domain of the adapter proteins Nck. Interacts (via its CNH regulatory domain) with ATL1 (via the N-terminal region). Interacts with RAP2A (GTP-bound form preferentially). It depends on Mg(2+) as a cofactor. In terms of tissue distribution, appears to be ubiquitous, expressed in all tissue types examined. Highest levels observed in heart and brain.

It localises to the cytoplasm. It catalyses the reaction L-seryl-[protein] + ATP = O-phospho-L-seryl-[protein] + ADP + H(+). The catalysed reaction is L-threonyl-[protein] + ATP = O-phospho-L-threonyl-[protein] + ADP + H(+). Serine/threonine kinase that plays a role in the response to environmental stress and cytokines such as TNF-alpha. Appears to act upstream of the JUN N-terminal pathway. Activator of the Hippo signaling pathway which plays a pivotal role in organ size control and tumor suppression by restricting proliferation and promoting apoptosis. MAP4Ks act in parallel to and are partially redundant with STK3/MST2 and STK4/MST2 in the phosphorylation and activation of LATS1/2, and establish MAP4Ks as components of the expanded Hippo pathway. Phosphorylates SMAD1 on Thr-322. This is Mitogen-activated protein kinase kinase kinase kinase 4 (Map4k4) from Mus musculus (Mouse).